Consider the following 359-residue polypeptide: MGSINQSLTQTEDEAFVFAMQLASASVLPMVLKATVELDLLEIMAKSGPGAFISPSELAAQLPTKNPEAPVMLDRMFRLLATYSVLNCTLRTLPDGRVERLYSLAPVCKFLTKNGDGVSIAPILLMNQDKVLMESWYHLTDAVLDGGVPFNKAYGMTTFEYHGTDPRFNKVFNCGMSDHTTLSMKKILEDYTGFEGLNSIVDVGGGTGATVNMIVSKYPSIKGINFDLPHVIRDAPSYPGVEQVGGDMFVSVPKADAIFMKWICHDWSDDHCIKLLKNCYEALPANGKVIIVECILPEAPDTSAATKSKVHGDIIMLAHNPGGKERTEKDFEALANWGWFSRFRKVCCAYHTWVMEFNK.

Position 126–132 (126–132 (MNQDKVL)) interacts with substrate. Residues 158–176 (TFEYHGTDPRFNKVFNCGM) form a substrate binding region. Glycine 204, aspartate 227, aspartate 247, methionine 248, and lysine 261 together coordinate S-adenosyl-L-methionine. Histidine 265 acts as the Proton acceptor in catalysis.

It belongs to the class I-like SAM-binding methyltransferase superfamily. Cation-independent O-methyltransferase family. COMT subfamily. In terms of assembly, homodimer.

It carries out the reaction (E)-caffeate + S-adenosyl-L-methionine = (E)-ferulate + S-adenosyl-L-homocysteine + H(+). The protein operates within aromatic compound metabolism; phenylpropanoid biosynthesis. In terms of biological role, catalyzes the conversion of caffeic acid to ferulic acid and of 5-hydroxyferulic acid to sinapic acid. The resulting products may subsequently be converted to the corresponding alcohols that are incorporated into lignins. The sequence is that of Caffeic acid 3-O-methyltransferase (COMT) from Capsicum chinense (Scotch bonnet).